The primary structure comprises 302 residues: Protein FdhE homolog (302 aa).

Belongs to the FdhE family.

It localises to the cytoplasm. In terms of biological role, necessary for formate dehydrogenase activity. The polypeptide is Protein FdhE homolog (Haemophilus influenzae (strain PittEE)).